The primary structure comprises 325 residues: Neural proliferation differentiation and control protein 1 (325 aa).

The signal sequence occupies residues 1–34 (MATPLPPPSPRHLRLLRLLLSGLVLGAALRGAAA). Positions 138 to 175 (QGLELGLPSTPGTPTPTPHTSLGSPVSSDPVHMSPLEP) are disordered. The helical transmembrane segment at 182 to 202 (GLALVLILAFCVAGAAALSVA) threads the bilayer. A Phosphoserine modification is found at Ser-229. The segment at 266–290 (EPPKELDTASSDEENEDGDFTVYEC) is disordered. Residues 275-284 (SSDEENEDGD) are compositionally biased toward acidic residues.

Belongs to the NPDC1/cab-1 family. As to expression, strongly expressed in adult brain; especially in hippocampus, frontal lobe and temporal lobe.

The protein resides in the membrane. Suppresses oncogenic transformation in neural and non-neural cells and down-regulates neural cell proliferation. Might be involved in transcriptional regulation. The sequence is that of Neural proliferation differentiation and control protein 1 (NPDC1) from Homo sapiens (Human).